Consider the following 211-residue polypeptide: Protein-L-isoaspartate O-methyltransferase (211 aa).

The active site involves Ser60.

It belongs to the methyltransferase superfamily. L-isoaspartyl/D-aspartyl protein methyltransferase family.

It localises to the cytoplasm. It catalyses the reaction [protein]-L-isoaspartate + S-adenosyl-L-methionine = [protein]-L-isoaspartate alpha-methyl ester + S-adenosyl-L-homocysteine. Functionally, catalyzes the methyl esterification of L-isoaspartyl residues in peptides and proteins that result from spontaneous decomposition of normal L-aspartyl and L-asparaginyl residues. It plays a role in the repair and/or degradation of damaged proteins. The chain is Protein-L-isoaspartate O-methyltransferase from Ectopseudomonas mendocina (strain ymp) (Pseudomonas mendocina).